The sequence spans 115 residues: Regulator of ribonuclease activity B (115 aa).

It belongs to the RraB family. As to quaternary structure, interacts with the C-terminal region of Rne.

The protein resides in the cytoplasm. In terms of biological role, globally modulates RNA abundance by binding to RNase E (Rne) and regulating its endonucleolytic activity. Can modulate Rne action in a substrate-dependent manner by altering the composition of the degradosome. This is Regulator of ribonuclease activity B from Aeromonas salmonicida (strain A449).